Consider the following 275-residue polypeptide: MNYNNPTQLQAAILDWAGTVVDFGSFAPTQIFVEAFAEFDVQVSIEEARGPMGMGKWDHIRTLCDVPEIAERYRKVFGRTPTDDDVTAIYNRFMPLQIEKIAVHSALIPGALDTLTGLRQDGLKIGSCSGYPKVVMDKVVELAAQNGYVADHVVATDETPNGRPWPAQALANVIALGIDDVAACVKVDDTVPGILEGRRAGMWTVALVCSGNALGLTWEGFRALSAEKLESERQRIHALFAGSRPHYLIDTINDLPEVIADINRRLAKGEMPQAF.

The active-site Nucleophile is Asp15. 2 residues coordinate Mg(2+): Asp15 and Ala17. Lys56 serves as the catalytic Schiff-base intermediate with substrate. Asp189 contributes to the Mg(2+) binding site.

Belongs to the HAD-like hydrolase superfamily. PhnX family. In terms of assembly, homodimer. It depends on Mg(2+) as a cofactor.

It catalyses the reaction phosphonoacetaldehyde + H2O = acetaldehyde + phosphate + H(+). Involved in phosphonate degradation. This Pseudomonas putida (strain ATCC 700007 / DSM 6899 / JCM 31910 / BCRC 17059 / LMG 24140 / F1) protein is Phosphonoacetaldehyde hydrolase.